A 178-amino-acid chain; its full sequence is uncharacterized protein (178 aa).

This is an uncharacterized protein from Rhizobium fredii (Sinorhizobium fredii).